Reading from the N-terminus, the 569-residue chain is F-box/WD repeat-containing protein 5 (569 aa).

In terms of domain architecture, F-box spans 3–49 (EGGMPLLPDSLVYQIFLSLGPADVLAAGLVCRQWQAVSRDEFLWREQ). The WD 1 repeat unit spans residues 90–129 (EHTDQVLHLSFSHSGYQFASCSKDCTVKIWNNDLTISLLH). Position 151 is a phosphoserine; by PLK4 (serine 151). The D-box motif lies at 308–316 (RRVFDSVLD). 2 WD repeats span residues 470–509 (TPND…CLAK) and 511–551 (RHED…RVLQ).

This sequence belongs to the FBXW5 family. As to quaternary structure, part of the SCF (SKP1-CUL1-F-box) E3 ubiquitin-protein ligase complex SCF(FBXW5) composed of CUL1, SKP1, RBX1 and FBXW5. Component of the DCX(FBXW5) E3 ubiquitin ligase complex, at least composed of (CUL4A or CUL4B), DDB1, FBXW5 and RBX1. Interacts with CDC20, EPS8, TSC1, TSC2 and SASS6. Interacts with TNFAIP8L1; TNFAIP8L1 competes with TSC2 to bind FBXW5 increasing TSC2 stability by preventing its ubiquitination. Phosphorylated at Ser-151 by PLK4 during the G1/S transition, leading to inhibit its ability to ubiquitinate SASS6. Post-translationally, ubiquitinated and degraded by the APC/C complex during mitosis and G1 phase.

Its subcellular location is the cytoplasm. The protein operates within protein modification; protein ubiquitination. Functionally, substrate recognition component of both SCF (SKP1-CUL1-F-box protein) and DCX (DDB1-CUL4-X-box) E3 ubiquitin-protein ligase complexes. Substrate recognition component of the SCF(FBXW5) E3 ubiquitin-protein ligase complex which mediates the ubiquitination and subsequent proteasomal degradation of SASS6 during S phase, leading to prevent centriole reduplication. The SCF(FBXW5) complex also mediates ubiquitination and degradation of actin-regulator EPS8 during G2 phase, leading to the transient degradation of EPS8 and subsequent cell shape changes required to allow mitotic progression. Substrate-specific adapter of the DCX(FBXW5) E3 ubiquitin-protein ligase complex which mediates the polyubiquitination and subsequent degradation of TSC2. May also act as a negative regulator of MAP3K7/TAK1 signaling in the interleukin-1B (IL1B) signaling pathway. This is F-box/WD repeat-containing protein 5 (Fbxw5) from Rattus norvegicus (Rat).